The sequence spans 345 residues: WD40 repeat protein poxJ (345 aa).

WD repeat units lie at residues A15–S49, L59–Q100, V101–T146, and V250–S284.

It belongs to the WD repeat rae1 family.

It participates in secondary metabolite biosynthesis. In terms of biological role, WD40 repeat protein; part of the gene cluster that mediates the biosynthesis of oxaleimides, cytotoxic compounds containing an unusual disubstituted succinimide moiety. The first step of the pathway is provided by the HR-PKS poxF that serves in a new mode of collaborative biosynthesis with the PKS-NRPS poxE, by providing the olefin containing amino acid substrate via the synthesis of an ACP-bound dec-4-enoate. The cytochrome P450 monooxygenase poxM-catalyzed oxidation at the alpha-position creates the enzyme-bound 2-hydroxydec-4-enoyl-ACP thioester, which may be prone to spontaneous hydrolysis to yield 2-hydroxydec-4-enoic acid due to increased electrophilicity of the carbonyl. 2-hydroxydec-4-enoic acid can then be further oxidized by poxM to yield the alpha-ketoacid 2-oxodec-4-enoicacid, which is reductively aminated by the aminotransferase poxL to yield (S,E)-2-aminodec-4-enoic acid. The Hybrid PKS-NRPS synthetase poxE then performs condensation between the octaketide product of its PKS modules and the amino group of (S,E)-2-aminodec-4-enoic acid which is activated and incorporated by the adenylation domain. The resulting aminoacyl product can be cyclized by the Diels-Alderase PoxQ and reductively released by the reductive (R) domain of poxE to yield an aldehyde intermediate. The released aldehyde is then substrate for a Knoevenagel condensation by the hydrolyase poxO followed by an oxidation at the 5-position of the pyrrolidone ring. The presence of the olefin from the amino acid building block allows for migration of the substituted allyl group to occur. This allylic transposition reaction takes place in a conjugate addition, semipinacol-like fashion to yield a succinimide intermediate. Iterative two-electron oxidations of the C7 methyl of the succinimide intermediate to the carboxylic acid can be catalyzed by one of two remaining cytochrome P450 monooxygenasess poxC or poxD to yield oxaleimide A. Subsequent oxidation yields the maleimide scaffold oxaleimide I. Both oxaleimide A and oxaleimide I can undergo oxidative modifications in the decalin ring to yield the series of products oxaleimides B to H. In Penicillium oxalicum (strain 114-2 / CGMCC 5302) (Penicillium decumbens), this protein is WD40 repeat protein poxJ.